Consider the following 86-residue polypeptide: Putative membrane protein insertion efficiency factor (86 aa).

It belongs to the UPF0161 family.

It is found in the cell inner membrane. Functionally, could be involved in insertion of integral membrane proteins into the membrane. This Pasteurella multocida (strain Pm70) protein is Putative membrane protein insertion efficiency factor.